A 166-amino-acid polypeptide reads, in one-letter code: UPF0179 protein Tneu_1978 (166 aa).

The interval P140 to K166 is disordered. The span at R157–K166 shows a compositional bias: pro residues.

The protein belongs to the UPF0179 family.

The polypeptide is UPF0179 protein Tneu_1978 (Pyrobaculum neutrophilum (strain DSM 2338 / JCM 9278 / NBRC 100436 / V24Sta) (Thermoproteus neutrophilus)).